A 327-amino-acid chain; its full sequence is tRNA N6-adenosine threonylcarbamoyltransferase (327 aa).

Residues histidine 109 and histidine 113 each contribute to the Fe cation site. Substrate is bound by residues 132–136 (MVSGG), aspartate 165, glycine 178, aspartate 182, and asparagine 268. Aspartate 296 is a binding site for Fe cation.

Belongs to the KAE1 / TsaD family. The cofactor is Fe(2+).

Its subcellular location is the cytoplasm. The enzyme catalyses L-threonylcarbamoyladenylate + adenosine(37) in tRNA = N(6)-L-threonylcarbamoyladenosine(37) in tRNA + AMP + H(+). Functionally, required for the formation of a threonylcarbamoyl group on adenosine at position 37 (t(6)A37) in tRNAs that read codons beginning with adenine. Is involved in the transfer of the threonylcarbamoyl moiety of threonylcarbamoyl-AMP (TC-AMP) to the N6 group of A37, together with TsaE and TsaB. TsaD likely plays a direct catalytic role in this reaction. The chain is tRNA N6-adenosine threonylcarbamoyltransferase from Thermotoga petrophila (strain ATCC BAA-488 / DSM 13995 / JCM 10881 / RKU-1).